The chain runs to 121 residues: uncharacterized protein (121 aa).

In terms of domain architecture, Cupin type-2 spans 47–101 (SEVPHYHAEHDLTFTVLKGKGELYLEGEKKKLKEGDWAFIPKGAVHFYRNTSELS).

This is an uncharacterized protein from Aquifex aeolicus (strain VF5).